A 1732-amino-acid polypeptide reads, in one-letter code: Transient receptor potential cation channel subfamily M member 3 (1732 aa).

Residues 1 to 894 (MPEPWGTVYF…RKIYEFYNAP (894 aa)) lie on the Cytoplasmic side of the membrane. Calmodulin-binding regions lie at residues 192–215 (NFEL…MTTG), 300–323 (TGKY…QKIN), 601–624 (RKRF…KLLG), and 793–816 (RKNS…LEFK). Residues 617-625 (PKALKLLGM) form a required for the inhibitory action of G-beta/gamma-subunits of heterotrimeric G-proteins region. Position 796 (Ser-796) interacts with 1,2-dioctanoyl-sn-glycero-3-phospho-(1D-myo-inositol-4,5-bisphosphate). The chain crosses the membrane as a helical span at residues 895-918 (IVKFWFYTLAYIGYLMLFNYIVLV). The Extracellular portion of the chain corresponds to 919–925 (KMERWPS). A helical transmembrane segment spans residues 926–948 (TQEWIVISYIFTLGIEKMREILM). The Cytoplasmic portion of the chain corresponds to 949 to 964 (SEPGKLLQKVKVWLQE). Residues 965–985 (YWNVTDLIAILLFSVGMILRL) traverse the membrane as a helical segment. Over 986–989 (QDQP) the chain is Extracellular. The helical transmembrane segment at 990–1013 (FRSDGRVIYCVNIIYWYIRLLDIF) threads the bilayer. Over 1014–1028 (GVNKYLGPYVMMIGK) the chain is Cytoplasmic. Positions 1017 and 1018 each coordinate 1,2-dioctanoyl-sn-glycero-3-phospho-(1D-myo-inositol-4,5-bisphosphate). A helical transmembrane segment spans residues 1029–1056 (MMIDMMYFVIIMLVVLMSFGVARQAILF). Residues 1057 to 1111 (PNEEPSWKLAKNIFYMPYWMIYGEVFADQIDPPCGQNETREDGKIIQLPPCKTGA) are Extracellular-facing. A helical membrane pass occupies residues 1112–1137 (WIVPAIMACYLLVANILLVNLLIAVF). Residues 1138-1732 (NNTFFEVKSI…AFQSFESKHN (595 aa)) lie on the Cytoplasmic side of the membrane. The stretch at 1241–1301 (ERIRVTSERV…LERLTGLERA (61 aa)) forms a coiled coil. The segment covering 1459-1476 (PVPSTAPSSSAYATLAPT) has biased composition (low complexity). Disordered regions lie at residues 1459–1478 (PVPS…PTDR) and 1611–1732 (REAE…SKHN). Polar residues-rich tracts occupy residues 1635–1653 (AISS…NNIT), 1690–1701 (NTASLRNPFQRS), and 1720–1732 (RTSA…SKHN).

It belongs to the transient receptor (TC 1.A.4) family. LTrpC subfamily. TRPM3 sub-subfamily. In terms of assembly, homotetramer. Interacts with TRPM1; the interaction results in the formation of a heteromultimeric cation channel complex that are functionally different from the homomeric channels. As to expression, expressed primarily in the kidney and, at lower levels, in brain, testis, ovary, pancreas and spinal cord. Expression in the brain and kidney was determined at protein level. In the kidney, expressed predominantly in the collecting tubular epithelium in the medulla, medullary rays, and periglomerular regions; in the brain, highest levels are found in the cerebellum, choroid plexus, the locus coeruleus, the posterior thalamus and the substantia nigra. Down-regulated in renal tumors compared to normal kidney. Expressed in the lens.

The protein resides in the cell membrane. The catalysed reaction is Ca(2+)(in) = Ca(2+)(out). The enzyme catalyses Mn(2+)(in) = Mn(2+)(out). It carries out the reaction Zn(2+)(in) = Zn(2+)(out). It catalyses the reaction Mg(2+)(in) = Mg(2+)(out). Its activity is regulated as follows. Activated by the neurosteroid pregnelonone sulfate (PregS); PregS activates the channel by shifting its current-voltage activation curve toward more negative membrane potentials and also potentiates temperature-induced activation. Activated by sphingosine. Activated by heat. Intracellular Ca(2+) inhibits TRPM3 probably via interaction with Ca(2+)/calmodulin. Intracellular Mg(2+) inhibits TRPM3 activity. Both intracellular and extracellular protons block TRPM3 through propable binding sites in the pore region. Positively regulated by phosphoinositide phosphoinositol 4,5-biphosphate (PI(4,5)P2). Strongly inhibited by activation of G(i)-coupled receptors via direct binding with G-betagamma-subunits of heterotrimeric G-proteins. In terms of biological role, constitutively active, non-selective divalent cation-conducting channel that is permeable to Ca(2+), Mn(2+), and Mg(2+), with a high permeability for Ca(2+). However, can be enhanced by increasing temperature and by ligands, including the endogenous neurosteroid pregnenolone sulfate and sphingosine-1 and suppressed by intracellular Mg(2+). Implicated in a variety of cellular processes, including insulin/peptide secretion, vascular constriction and dilation, noxious heat sensing, inflammatory and spontaneous pain sensitivity. In neurons of the dorsal root ganglia, functions as thermosensitive channel for the detection of noxious heat and spontaneous pain. Suggested to function as an ionotropic steroid receptor in beta-cell, indeed pregnenolone sulfate leads to Ca(2+) influx and enhanced insulin secretion. Mediates Zn(2+) uptake into the lumen of pancreatic beta cell secretory granules, thereby regulating insulin secretion. Forms heteromultimeric ion channels with TRPM1 which are permeable for Ca(2+) and Zn(2+) ions. Exists as multiple splice variants which differ significantly in their biophysical properties. This is Transient receptor potential cation channel subfamily M member 3 from Homo sapiens (Human).